A 92-amino-acid chain; its full sequence is Exodeoxyribonuclease 7 small subunit (92 aa).

The disordered stretch occupies residues 1 to 22; the sequence is MPKKNAISESTNSTPETAPAMT. Residues 7–16 are compositionally biased toward polar residues; it reads ISESTNSTPE.

Belongs to the XseB family. Heterooligomer composed of large and small subunits.

It localises to the cytoplasm. The enzyme catalyses Exonucleolytic cleavage in either 5'- to 3'- or 3'- to 5'-direction to yield nucleoside 5'-phosphates.. Its function is as follows. Bidirectionally degrades single-stranded DNA into large acid-insoluble oligonucleotides, which are then degraded further into small acid-soluble oligonucleotides. The chain is Exodeoxyribonuclease 7 small subunit from Photorhabdus laumondii subsp. laumondii (strain DSM 15139 / CIP 105565 / TT01) (Photorhabdus luminescens subsp. laumondii).